Here is a 285-residue protein sequence, read N- to C-terminus: MLIIDGKKTAQDIRAELATEVTAATAEGRRAPGLAVILVGEDPASQVYVRNKEKACTEVGITSFAYRLPAETGQQELLDLIAECNARPDVDGILLQLPLPRGLDAQACLLAIDPAKDVDGFHPENVGRLSLGLPGFVSCTPAGVMELLRRYNLPTRGKKAVVVGRSDIVGKPLALLLTRSGEFGDATVTICHSRTPDLAEECRKADFLFLAVGRPRLITGDMVRQGAVVIDVGINRSDDGLCGDADYESVSKKAAAITPVPGGVGPMTIAMLLVNTVQSWRQRTA.

NADP(+) is bound by residues 164-166, Ser193, and Ile234; that span reads GRS.

The protein belongs to the tetrahydrofolate dehydrogenase/cyclohydrolase family. As to quaternary structure, homodimer.

It catalyses the reaction (6R)-5,10-methylene-5,6,7,8-tetrahydrofolate + NADP(+) = (6R)-5,10-methenyltetrahydrofolate + NADPH. The catalysed reaction is (6R)-5,10-methenyltetrahydrofolate + H2O = (6R)-10-formyltetrahydrofolate + H(+). It functions in the pathway one-carbon metabolism; tetrahydrofolate interconversion. Its function is as follows. Catalyzes the oxidation of 5,10-methylenetetrahydrofolate to 5,10-methenyltetrahydrofolate and then the hydrolysis of 5,10-methenyltetrahydrofolate to 10-formyltetrahydrofolate. The chain is Bifunctional protein FolD from Desulfovibrio desulfuricans (strain ATCC 27774 / DSM 6949 / MB).